The chain runs to 311 residues: Homoserine kinase (311 aa).

88 to 98 (PEGLGLGSSGA) is an ATP binding site.

This sequence belongs to the GHMP kinase family. Homoserine kinase subfamily.

It localises to the cytoplasm. The enzyme catalyses L-homoserine + ATP = O-phospho-L-homoserine + ADP + H(+). It participates in amino-acid biosynthesis; L-threonine biosynthesis; L-threonine from L-aspartate: step 4/5. In terms of biological role, catalyzes the ATP-dependent phosphorylation of L-homoserine to L-homoserine phosphate. This Saccharolobus islandicus (strain L.S.2.15 / Lassen #1) (Sulfolobus islandicus) protein is Homoserine kinase.